The primary structure comprises 109 residues: Large ribosomal subunit protein eL42 (109 aa).

A disordered region spans residues 23 to 53 (VSQYKKSKESTHAQGRRRYDMKQSGFGGQTK). Over residues 28 to 43 (KSKESTHAQGRRRYDM) the composition is skewed to basic and acidic residues.

Belongs to the eukaryotic ribosomal protein eL42 family.

The protein resides in the cytoplasm. This is Large ribosomal subunit protein eL42 (RPL36A) from Tetrahymena thermophila (strain SB210).